A 112-amino-acid polypeptide reads, in one-letter code: MTELAQMKCEACQADAPKVTDDELAQLIAKIPDWGVEVRDGIMQLERVYKFKNFKLAMAFTNKLADLAEADFHHPGILTEWGKVTVTWWSHSIKGLHKNDFIMAAKTDTLLD.

It belongs to the pterin-4-alpha-carbinolamine dehydratase family.

It catalyses the reaction (4aS,6R)-4a-hydroxy-L-erythro-5,6,7,8-tetrahydrobiopterin = (6R)-L-erythro-6,7-dihydrobiopterin + H2O. In Shewanella halifaxensis (strain HAW-EB4), this protein is Putative pterin-4-alpha-carbinolamine dehydratase.